The primary structure comprises 155 residues: Ribosome maturation factor RimP (155 aa).

Belongs to the RimP family.

It is found in the cytoplasm. Required for maturation of 30S ribosomal subunits. In Bacteroides thetaiotaomicron (strain ATCC 29148 / DSM 2079 / JCM 5827 / CCUG 10774 / NCTC 10582 / VPI-5482 / E50), this protein is Ribosome maturation factor RimP.